Here is a 570-residue protein sequence, read N- to C-terminus: MKASQFFISTLKEAPAEAALASHKLMIRAGLIKANASGLYTWMPMGLRVLRKVENVVREEMARAGSVELLMPVVQPAELWQESGRWEFYGKELLRLKDRHDRDFCMGPTCEEVIADIVRKEINSYKQLPKNFYHIQTKFRDEVRPRFGVMRAREFVMKDAYSFHADYASLQTTYQDMYDAYCRIFTRLGLAFRPVAADTGSIGGTGSHEFQVLAESGEDVIAYSDTSDYAANIELAPTLPLKGERAAAQAELVKVHTPNVKTIDSLVDFLSIPIEKTLKSIVVEGENEGELILLLLRGDHEFNDIKAEKLAGVKSPLTMASPAAIVEQFGANGGSLGPVGFAGKVYADFATEKGADWVIGANEDDYHYTGFNFGRDAAEPEFVDLRNVVEGDESPDGQGRLKLARGIEVGHVFQLRDKYTQAMNVSFLDNNGKSQIMEMGCYGIGITRVVAAAIEQNNDEKGIIWTKAMAPFEVVIVPMNYKKSDTVREAADKIYAELLAAGADVLLDDRDERAGVLLNDSELLGIPHRIVIGDRALKEGNVEYAERRDNEAQAVAIGEIVARVTASLNA.

This sequence belongs to the class-II aminoacyl-tRNA synthetase family. ProS type 1 subfamily. Homodimer.

It is found in the cytoplasm. The enzyme catalyses tRNA(Pro) + L-proline + ATP = L-prolyl-tRNA(Pro) + AMP + diphosphate. Its function is as follows. Catalyzes the attachment of proline to tRNA(Pro) in a two-step reaction: proline is first activated by ATP to form Pro-AMP and then transferred to the acceptor end of tRNA(Pro). As ProRS can inadvertently accommodate and process non-cognate amino acids such as alanine and cysteine, to avoid such errors it has two additional distinct editing activities against alanine. One activity is designated as 'pretransfer' editing and involves the tRNA(Pro)-independent hydrolysis of activated Ala-AMP. The other activity is designated 'posttransfer' editing and involves deacylation of mischarged Ala-tRNA(Pro). The misacylated Cys-tRNA(Pro) is not edited by ProRS. This chain is Proline--tRNA ligase, found in Neisseria meningitidis serogroup B (strain ATCC BAA-335 / MC58).